Consider the following 396-residue polypeptide: Ribosomal RNA large subunit methyltransferase I (396 aa).

Positions 2–79 (TSAVYLQAGR…EKEVIDQHFF (78 aa)) constitute a PUA domain.

Belongs to the methyltransferase superfamily. RlmI family.

Its subcellular location is the cytoplasm. The enzyme catalyses cytidine(1962) in 23S rRNA + S-adenosyl-L-methionine = 5-methylcytidine(1962) in 23S rRNA + S-adenosyl-L-homocysteine + H(+). In terms of biological role, specifically methylates the cytosine at position 1962 (m5C1962) of 23S rRNA. In Pseudoalteromonas translucida (strain TAC 125), this protein is Ribosomal RNA large subunit methyltransferase I.